The following is a 776-amino-acid chain: Conserved oligomeric Golgi complex subunit 4 (776 aa).

Ser342 and Ser345 each carry phosphoserine.

The protein belongs to the COG4 family. In terms of assembly, component of the conserved oligomeric Golgi complex which is composed of eight different subunits and is required for normal Golgi morphology and localization.

It is found in the golgi apparatus membrane. Its function is as follows. Required for normal Golgi function. This is Conserved oligomeric Golgi complex subunit 4 from Drosophila melanogaster (Fruit fly).